The sequence spans 201 residues: GTP cyclohydrolase 1 (201 aa).

Residues C90, H93, and C163 each coordinate Zn(2+).

This sequence belongs to the GTP cyclohydrolase I family. Toroid-shaped homodecamer, composed of two pentamers of five dimers.

It carries out the reaction GTP + H2O = 7,8-dihydroneopterin 3'-triphosphate + formate + H(+). It participates in cofactor biosynthesis; 7,8-dihydroneopterin triphosphate biosynthesis; 7,8-dihydroneopterin triphosphate from GTP: step 1/1. The protein is GTP cyclohydrolase 1 (folE) of Streptomyces coelicolor (strain ATCC BAA-471 / A3(2) / M145).